The primary structure comprises 84 residues: Putative regulatory protein Hore_09800 (84 aa).

The protein belongs to the RemA family.

The polypeptide is Putative regulatory protein Hore_09800 (Halothermothrix orenii (strain H 168 / OCM 544 / DSM 9562)).